A 390-amino-acid chain; its full sequence is S-adenosylmethionine synthase (390 aa).

E12 lines the Mg(2+) pocket. H18 is a binding site for ATP. E46 contacts K(+). E59 and Q102 together coordinate L-methionine. ATP contacts are provided by residues 170-172 (DGK), 238-241 (SGRF), D249, 255-256 (RK), A272, K276, and K280. L-methionine is bound at residue D249. L-methionine is bound at residue K280.

The protein belongs to the AdoMet synthase family. In terms of assembly, homotetramer. Mn(2+) is required as a cofactor. The cofactor is Mg(2+). Requires Co(2+) as cofactor. K(+) serves as cofactor.

It is found in the cytoplasm. It catalyses the reaction L-methionine + ATP + H2O = S-adenosyl-L-methionine + phosphate + diphosphate. It participates in amino-acid biosynthesis; S-adenosyl-L-methionine biosynthesis; S-adenosyl-L-methionine from L-methionine: step 1/1. In terms of biological role, catalyzes the formation of S-adenosylmethionine from methionine and ATP. The reaction comprises two steps that are both catalyzed by the same enzyme: formation of S-adenosylmethionine (AdoMet) and triphosphate, and subsequent hydrolysis of the triphosphate. The polypeptide is S-adenosylmethionine synthase (METM) (Chlamydomonas reinhardtii (Chlamydomonas smithii)).